Here is a 729-residue protein sequence, read N- to C-terminus: Alpha-galactosidase AgaA (729 aa).

Substrate-binding positions include Asp-53, Trp-199, 366-367 (DD), Arg-443, 476-480 (KWDMN), Cys-526, and Asp-548. Asp-478 (nucleophile) is an active-site residue. Asp-548 serves as the catalytic Proton donor.

It belongs to the glycosyl hydrolase 36 family. As to quaternary structure, homotetramer.

The catalysed reaction is Hydrolysis of terminal, non-reducing alpha-D-galactose residues in alpha-D-galactosides, including galactose oligosaccharides, galactomannans and galactolipids.. Its activity is regulated as follows. Not inhibited by D-galactose or sucrose. Inhibited by pharmaceutical drug 1-deoxygalactonojirimycin. In terms of biological role, hydrolyzes the short-chain alpha-galactosaccharides raffinose and stachyose. This is Alpha-galactosidase AgaA from Geobacillus stearothermophilus (Bacillus stearothermophilus).